A 241-amino-acid polypeptide reads, in one-letter code: Zinc finger CCHC domain-containing protein 17 (241 aa).

One can recognise an S1 motif domain in the interval 16 to 88 (YTIFQGEVAM…DRIKVSLSMK (73 aa)). Serine 114 bears the Phosphoserine mark. The CCHC-type zinc-finger motif lies at 131–148 (TTCKKCGCKGHFAKDCFM). Lysine 144 is subject to N6-acetyllysine. Positions 161–241 (EEEEKEEAKS…KKKHKKKHKE (81 aa)) are disordered. Positions 166–178 (EEAKSAEFEKPDP) are enriched in basic and acidic residues. Positions 182–198 (PSRKRKKEKKKKKHRDR) are enriched in basic residues. Residue serine 183 is modified to Phosphoserine. Residues 211–225 (DTGKRARHTSKDSKA) show a composition bias toward basic and acidic residues. The span at 226–241 (AKKKKKKKKHKKKHKE) shows a compositional bias: basic residues.

In terms of assembly, interacts with PNN. Associates with the 60S ribosomal subunit.

It is found in the nucleus. The protein localises to the nucleolus. The polypeptide is Zinc finger CCHC domain-containing protein 17 (ZCCHC17) (Homo sapiens (Human)).